The following is a 262-amino-acid chain: Triosephosphate isomerase (262 aa).

13–15 (NWK) is a substrate binding site. Residue His-103 is the Electrophile of the active site. Residue Glu-175 is the Proton acceptor of the active site. Substrate contacts are provided by residues Gly-181, Ser-221, and 242–243 (GG).

The protein belongs to the triosephosphate isomerase family. In terms of assembly, homodimer.

Its subcellular location is the cytoplasm. It carries out the reaction D-glyceraldehyde 3-phosphate = dihydroxyacetone phosphate. It functions in the pathway carbohydrate biosynthesis; gluconeogenesis. It participates in carbohydrate degradation; glycolysis; D-glyceraldehyde 3-phosphate from glycerone phosphate: step 1/1. Its function is as follows. Involved in the gluconeogenesis. Catalyzes stereospecifically the conversion of dihydroxyacetone phosphate (DHAP) to D-glyceraldehyde-3-phosphate (G3P). The chain is Triosephosphate isomerase from Corynebacterium efficiens (strain DSM 44549 / YS-314 / AJ 12310 / JCM 11189 / NBRC 100395).